The sequence spans 202 residues: Transmembrane protein 223 (202 aa).

The Mitochondrial matrix portion of the chain corresponds to 1–43; sequence MAAPWRRWPTGLLAVLRPLLTCRPLQGTTLQRDVLLFEHDRGR. A helical membrane pass occupies residues 44–64; sequence FFTILGLFCAGQGVFWASMAV. Residues 65-97 are Mitochondrial intermembrane-facing; it reads AAVSRPPVPVQPLDAEVPNRGPFDLRSALWRYG. The chain crosses the membrane as a helical span at residues 98-118; it reads LAVGCGAIGALVLGAGLLFSL. The Mitochondrial matrix portion of the chain corresponds to 119-202; the sequence is RSVRSVVLRA…DNTVGAYRSL (84 aa).

This sequence belongs to the TMEM223 family. In terms of assembly, associates with the mitochondrial ribosome.

The protein localises to the mitochondrion inner membrane. Mitochondrial ribosome-associated protein involved in the first steps of cytochrome c oxidase complex (complex IV) biogenesis. Stimulates the translation of MT-CO1 mRNA and is a constituent of early MT-CO1 assembly intermediates. The protein is Transmembrane protein 223 of Homo sapiens (Human).